We begin with the raw amino-acid sequence, 551 residues long: Chitinase (551 aa).

Residues 1-17 form the signal peptide; it reads MLYKLLNVLWLVAVSNA. Positions 1-149 are chitin binding domain (CBD); that stretch reads MLYKLLNVLW…NKPGRREDKI (149 aa). The 401-residue stretch at 148–548 folds into the GH18 domain; sequence KIVAAYFVEW…NAINAQFKPK (401 aa). Asn-173 carries an N-linked (GlcNAc...) asparagine; by host glycan. The active-site Proton donor is the Glu-305. N-linked (GlcNAc...) asparagine; by host glycosylation is present at Asn-444. Positions 548-551 match the Prevents secretion from ER motif; it reads KDEL.

It belongs to the glycosyl hydrolase 18 family. Chitinase class II subfamily. In terms of assembly, interacts with host VCATH.

The protein localises to the host endoplasmic reticulum lumen. It catalyses the reaction Random endo-hydrolysis of N-acetyl-beta-D-glucosaminide (1-&gt;4)-beta-linkages in chitin and chitodextrins.. Functionally, plays a role in host liquefaction to facilitate horizontal transmission of the virus by hydrolyzing beta-chitin and by regulating the cysteine protease VCATH. Localized in the host reticulum endoplasmic via its KDEL motif, interacts with and thus prevents VCATH secretion before host cell lysis occurs. This chain is Chitinase (CHIA), found in Lepidoptera (butterflies and moths).